The sequence spans 435 residues: Serine--tRNA ligase (435 aa).

Position 241–243 (241–243) interacts with L-serine; the sequence is TAE. ATP is bound at residue 272–274; it reads RSE. E295 contributes to the L-serine binding site. ATP is bound at residue 359-362; the sequence is EISS. S395 provides a ligand contact to L-serine.

It belongs to the class-II aminoacyl-tRNA synthetase family. Type-1 seryl-tRNA synthetase subfamily. In terms of assembly, homodimer. The tRNA molecule binds across the dimer.

It localises to the cytoplasm. It catalyses the reaction tRNA(Ser) + L-serine + ATP = L-seryl-tRNA(Ser) + AMP + diphosphate + H(+). The catalysed reaction is tRNA(Sec) + L-serine + ATP = L-seryl-tRNA(Sec) + AMP + diphosphate + H(+). Its pathway is aminoacyl-tRNA biosynthesis; selenocysteinyl-tRNA(Sec) biosynthesis; L-seryl-tRNA(Sec) from L-serine and tRNA(Sec): step 1/1. Catalyzes the attachment of serine to tRNA(Ser). Is also able to aminoacylate tRNA(Sec) with serine, to form the misacylated tRNA L-seryl-tRNA(Sec), which will be further converted into selenocysteinyl-tRNA(Sec). In Actinobacillus pleuropneumoniae serotype 7 (strain AP76), this protein is Serine--tRNA ligase.